Consider the following 121-residue polypeptide: Ubiquitin-related modifier 1 (121 aa).

The residue at position 121 (glycine 121) is a 1-thioglycine. A Glycyl lysine isopeptide (Gly-Lys) (interchain with K-? in acceptor proteins) cross-link involves residue glycine 121.

This sequence belongs to the URM1 family. Post-translationally, C-terminal thiocarboxylation occurs in 2 steps, it is first acyl-adenylated (-COAMP) via the hesA/moeB/thiF part of UBA4, then thiocarboxylated (-COSH) via the rhodanese domain of UBA4.

The protein resides in the cytoplasm. Its pathway is tRNA modification; 5-methoxycarbonylmethyl-2-thiouridine-tRNA biosynthesis. Functionally, acts as a sulfur carrier required for 2-thiolation of mcm(5)S(2)U at tRNA wobble positions of cytosolic tRNA(Lys), tRNA(Glu) and tRNA(Gln). Serves as sulfur donor in tRNA 2-thiolation reaction by being thiocarboxylated (-COSH) at its C-terminus by the MOCS3 homolog UBA4. The sulfur is then transferred to tRNA to form 2-thiolation of mcm(5)S(2)U. Prior mcm(5) tRNA modification by the elongator complex is required for 2-thiolation. Also acts as a ubiquitin-like protein (UBL) that is covalently conjugated via an isopeptide bond to lysine residues of target proteins such as AHP1. The thiocarboxylated form serves as substrate for conjugation and oxidative stress specifically induces the formation of UBL-protein conjugates. This chain is Ubiquitin-related modifier 1, found in Ajellomyces capsulatus (strain NAm1 / WU24) (Darling's disease fungus).